Reading from the N-terminus, the 347-residue chain is D-alanine--D-alanine ligase (347 aa).

Positions 131–333 constitute an ATP-grasp domain; it reads KRVLESAGIA…YPELIERLVD (203 aa). 161-216 contributes to the ATP binding site; it reads EEKLAYPVFTKPSNMGSSVGISKSENQEELRQALKLAFRYDSRVLVEQGVNAREIE. Mg(2+) is bound by residues Asp287, Glu300, and Asn302.

The protein belongs to the D-alanine--D-alanine ligase family. The cofactor is Mg(2+). It depends on Mn(2+) as a cofactor.

The protein resides in the cytoplasm. The catalysed reaction is 2 D-alanine + ATP = D-alanyl-D-alanine + ADP + phosphate + H(+). It participates in cell wall biogenesis; peptidoglycan biosynthesis. In terms of biological role, cell wall formation. The sequence is that of D-alanine--D-alanine ligase from Streptococcus pneumoniae (strain ATCC BAA-255 / R6).